Here is a 217-residue protein sequence, read N- to C-terminus: Phosphatidylserine decarboxylase proenzyme (217 aa).

The Schiff-base intermediate with substrate; via pyruvic acid role is filled by S187. S187 carries the post-translational modification Pyruvic acid (Ser); by autocatalysis.

The protein belongs to the phosphatidylserine decarboxylase family. PSD-A subfamily. As to quaternary structure, heterodimer of a large membrane-associated beta subunit and a small pyruvoyl-containing alpha subunit. Pyruvate is required as a cofactor. Post-translationally, is synthesized initially as an inactive proenzyme. Formation of the active enzyme involves a self-maturation process in which the active site pyruvoyl group is generated from an internal serine residue via an autocatalytic post-translational modification. Two non-identical subunits are generated from the proenzyme in this reaction, and the pyruvate is formed at the N-terminus of the alpha chain, which is derived from the carboxyl end of the proenzyme. The post-translation cleavage follows an unusual pathway, termed non-hydrolytic serinolysis, in which the side chain hydroxyl group of the serine supplies its oxygen atom to form the C-terminus of the beta chain, while the remainder of the serine residue undergoes an oxidative deamination to produce ammonia and the pyruvoyl prosthetic group on the alpha chain.

Its subcellular location is the cell membrane. The catalysed reaction is a 1,2-diacyl-sn-glycero-3-phospho-L-serine + H(+) = a 1,2-diacyl-sn-glycero-3-phosphoethanolamine + CO2. Its pathway is phospholipid metabolism; phosphatidylethanolamine biosynthesis; phosphatidylethanolamine from CDP-diacylglycerol: step 2/2. In terms of biological role, catalyzes the formation of phosphatidylethanolamine (PtdEtn) from phosphatidylserine (PtdSer). The polypeptide is Phosphatidylserine decarboxylase proenzyme (Thermobifida fusca (strain YX)).